A 129-amino-acid chain; its full sequence is Profilin-4 (129 aa).

It belongs to the profilin family.

It is found in the cytoplasm. In terms of biological role, involved in male fertility. Required for manchette development and acrosome biogenesis during spermiogenesis. Binds in vitro to phospholipids, including phosphatidylinositol 3-phosphate (PtdIns(3)P), phosphatidylinositol 4,5-bisphosphate (PtdIns(4,5)P2), phosphatidylinositol 4-phosphate (PtdIns(4)P) and phosphatidic acid (PA). Contrary to other profilin family members, does not bind to actin in vitro. This chain is Profilin-4 (PFN4), found in Bos taurus (Bovine).